The chain runs to 145 residues: uncharacterized protein (145 aa).

A signal peptide spans 1–23 (MSSSNLSSRKTRISAHFLDAAPA). A helical transmembrane segment spans residues 123–140 (VLLLIIALVFLLFVAIFI).

It is found in the membrane. This is an uncharacterized protein from Archaeoglobus fulgidus (strain ATCC 49558 / DSM 4304 / JCM 9628 / NBRC 100126 / VC-16).